The following is a 211-amino-acid chain: Thymidylate kinase (211 aa).

11–18 (GPDGAGKT) lines the ATP pocket.

Belongs to the thymidylate kinase family.

The enzyme catalyses dTMP + ATP = dTDP + ADP. Its function is as follows. Phosphorylation of dTMP to form dTDP in both de novo and salvage pathways of dTTP synthesis. The chain is Thymidylate kinase from Streptococcus pyogenes serotype M3 (strain ATCC BAA-595 / MGAS315).